A 414-amino-acid chain; its full sequence is Argininosuccinate synthase (414 aa).

ATP-binding positions include 9-17 and Ala-35; that span reads AYSGGLDTS. The L-citrulline site is built by Tyr-86 and Ser-91. 114–122 provides a ligand contact to ATP; it reads SHGATGKGN. Positions 118, 122, and 123 each coordinate L-aspartate. Asn-122 contributes to the L-citrulline binding site. 5 residues coordinate L-citrulline: Arg-126, Ser-179, Ser-188, Glu-269, and Tyr-281.

Belongs to the argininosuccinate synthase family. In terms of assembly, homotetramer.

Its subcellular location is the cytoplasm. The protein resides in the cytosol. The enzyme catalyses L-citrulline + L-aspartate + ATP = 2-(N(omega)-L-arginino)succinate + AMP + diphosphate + H(+). The protein operates within amino-acid biosynthesis; L-arginine biosynthesis; L-arginine from L-ornithine and carbamoyl phosphate: step 2/3. Its pathway is nitrogen metabolism; urea cycle; (N(omega)-L-arginino)succinate from L-aspartate and L-citrulline: step 1/1. In terms of biological role, one of the enzymes of the urea cycle, the metabolic pathway transforming neurotoxic amonia produced by protein catabolism into inocuous urea in the liver of ureotelic animals. Catalyzes the formation of arginosuccinate from aspartate, citrulline and ATP and together with ASL it is responsible for the biosynthesis of arginine in most body tissues. The sequence is that of Argininosuccinate synthase from Danio rerio (Zebrafish).